The sequence spans 116 residues: Nitrogenase-stabilizing/protective protein NifW (116 aa).

It belongs to the NifW family. In terms of assembly, homotrimer; associates with NifD.

Functionally, may protect the nitrogenase Fe-Mo protein from oxidative damage. This is Nitrogenase-stabilizing/protective protein NifW from Rhodopseudomonas palustris (strain TIE-1).